The chain runs to 227 residues: uncharacterized protein (227 aa).

A run of 3 helical transmembrane segments spans residues 109–128 (MCNVGLVLMMVFAAFYFAGI), 173–192 (AILLSVTLLALTPVIGILLT), and 199–221 (ALRVIFLVIAVEFVYAIFRVMMG).

It is found in the cell membrane. This is an uncharacterized protein from Archaeoglobus fulgidus (strain ATCC 49558 / DSM 4304 / JCM 9628 / NBRC 100126 / VC-16).